The sequence spans 405 residues: Nodal homolog 2-A (405 aa).

Residues 1–18 form the signal peptide; sequence MASLGVILFFVIASLIHG. Residues 19-282 constitute a propeptide that is removed on maturation; it reads KPIHSERKAA…RVTDTRRPRR (264 aa). N-linked (GlcNAc...) asparagine glycosylation is found at asparagine 71, asparagine 172, and asparagine 343. Intrachain disulfides connect cysteine 305–cysteine 371, cysteine 334–cysteine 402, and cysteine 338–cysteine 404.

It belongs to the TGF-beta family. Homodimer; disulfide-linked. Forms heterodimers with the TGF-beta family member derriere. Interacts with tsku; enhances nodal2 activity. As to expression, first localized to the vegetal region of the blastula. Just prior to gastrulation (stage 10), this expression disappears and instead becomes localized to the dorsal marginal zone, with enrichment in the organizer.

Its subcellular location is the secreted. In terms of biological role, cooperation and regulatory loops of multiple nodals are essential for mesendoderm patterning in early embryos. Essential for mesoderm formation and axial patterning during embryonic development. Activates the activin-like signaling pathway to induce dorsal and ventral mesoderm in animal cap ectoderm. In addition, also dorsalizes ventral marginal zone (VMZ) tissues during gastrulation. Induces muscle actin. Appears to act as both a short-range and long-range morphogen. The unprocessed protein inhibits bmp- and wnt-signaling. This chain is Nodal homolog 2-A (nodal2-a), found in Xenopus laevis (African clawed frog).